Consider the following 349-residue polypeptide: MQTTYLSMGSNIGDRQYYLHEAIRLLGKHPKIMIEKVSNFYESTPVGGVKQDDFTNLALKVATLLEPLELLSFIHEVELSLNRERKIHWGPRTIDIDIIFYDDLEMQVENLVIPHKEAFNRLFVLKPIFELIDKDFKYYASIEKAIAELSVSEQELHVIKEEKTPRNRIEDAVKEILFAVGENPNREGLLETPARVAKMYEEILSSQRLSKFNEYKLFEIDSSKTDSIVLIKDIPFYSMCEHHMLPFFGKAHVAYIPADGKIIGLSKIPRLVDYVSRKLSVQENITHDIGDILTDILNPKGVAVLVEGRHMCVEMRGVKKVNSITKTSYFLGEFKENNEKRMEFLESLL.

The segment at 1–226 is 2-amino-4-hydroxy-6-hydroxymethyldihydropteridine pyrophosphokinase; sequence MQTTYLSMGS…LFEIDSSKTD (226 aa). The GTP cyclohydrolase 1 stretch occupies residues 226–349; the sequence is DSIVLIKDIP…KRMEFLESLL (124 aa).

It in the N-terminal section; belongs to the HPPK family. The protein in the C-terminal section; belongs to the GTP cyclohydrolase I family. As to quaternary structure, homomer.

It catalyses the reaction 6-hydroxymethyl-7,8-dihydropterin + ATP = (7,8-dihydropterin-6-yl)methyl diphosphate + AMP + H(+). The enzyme catalyses GTP + H2O = 7,8-dihydroneopterin 3'-triphosphate + formate + H(+). The protein operates within cofactor biosynthesis; 7,8-dihydroneopterin triphosphate biosynthesis; 7,8-dihydroneopterin triphosphate from GTP: step 1/1. It functions in the pathway cofactor biosynthesis; tetrahydrofolate biosynthesis; 2-amino-4-hydroxy-6-hydroxymethyl-7,8-dihydropteridine diphosphate from 7,8-dihydroneopterin triphosphate: step 4/4. The chain is Bifunctional protein FolKE (folKE) from Lactococcus lactis subsp. lactis (strain IL1403) (Streptococcus lactis).